The following is a 1314-amino-acid chain: Synergin gamma (1314 aa).

The stretch at 115–155 forms a coiled coil; the sequence is MQKQFAEEQQKRFEQQQKLLEEERKRRQFEEQKQKLRLLSS. Residues 178-199 are disordered; it reads GFSRDAKMHPTPASHPKKPGPS. The EH domain maps to 295–388; it reads NESLVPDAYK…QFPAAPIPTL (94 aa). The short motif at 457–461 is the DFXDF motif 1 element; that stretch reads DFQDF. Residues 460 to 498 form a disordered region; it reads DFQDASKSGSLDDSFSDFQELPASSKTSNSQHGNSAPSL. The segment covering 462–496 has biased composition (polar residues); it reads QDASKSGSLDDSFSDFQELPASSKTSNSQHGNSAP. S473 is subject to Phosphoserine. Position 513 is an N6-acetyllysine (K513). Positions 518–786 are interaction with AP1G1; that stretch reads KGIAADKSSE…ADFHSSKFSS (269 aa). Position 580 is a phosphoserine (S580). Residues 666–678 are interaction with AP1G1, AP1G2 and GGA1; that stretch reads LADDFGEFSLFGE. Positions 690–694 match the DFXDF motif 2 motif; it reads DFADF. Position 720 is a phosphoserine (S720). At K744 the chain carries N6-acetyllysine. A phosphoserine mark is found at S752 and S772. The DFXDF motif 3 motif lies at 775-779; the sequence is DFADF. 6 positions are modified to phosphoserine: S812, S852, S855, S909, S919, and S935. Disordered stretches follow at residues 972 to 1026 and 1073 to 1102; these read PQTS…DFGE and SLSLGDKEISRSSPSPALEQPFRDRSNTLN. Residues 976 to 990 are compositionally biased toward basic and acidic residues; it reads EQKEYENRDYKDFTK. Residues 1001 to 1019 are compositionally biased toward polar residues; that stretch reads EATCPSPASSGASQETPNE. 5 positions are modified to phosphoserine: S1006, S1073, S1075, S1087, and S1098. T1100 is modified (phosphothreonine).

As to quaternary structure, self-associates. Interacts with GGA1 (via GAE domain). Interacts with GGA2 and GGA3. Interacts with AP1G1 (via GAE domain), a subunit of adapter protein complex AP-1. Interacts with AP1G2 (via GAE domain) a subunit of adapter protein complex AP-1. Component of the aftiphilin/p200/gamma-synergin complex, at least composed of AFTPH/aftiphilin, HEATR5B/p200a and SYNRG/gamma-synergin, which plays a role in the AP1G1/AP-1-mediated trafficking of transferrin from early to recycling endosomes. Within the complex interacts with AFTPH/aftiphilin and HEATR5B/p200a; the interactions are direct. Interacts (via EH domain) with SCAMP1.

The protein localises to the cytoplasm. It localises to the golgi apparatus. The protein resides in the trans-Golgi network membrane. Its subcellular location is the perinuclear region. It is found in the cytoplasmic vesicle. The protein localises to the clathrin-coated vesicle. Its function is as follows. Plays a role in endocytosis and/or membrane trafficking at the trans-Golgi network (TGN). May act by linking the adapter protein complex AP-1 to other proteins. Component of clathrin-coated vesicles. Component of the aftiphilin/p200/gamma-synergin complex, which plays roles in AP1G1/AP-1-mediated protein trafficking including the trafficking of transferrin from early to recycling endosomes, and the membrane trafficking of furin and the lysosomal enzyme cathepsin D between the trans-Golgi network (TGN) and endosomes. This Homo sapiens (Human) protein is Synergin gamma.